The chain runs to 293 residues: Elongation factor Ts (293 aa).

The tract at residues 80–83 (TDFV) is involved in Mg(2+) ion dislocation from EF-Tu.

The protein belongs to the EF-Ts family.

The protein resides in the cytoplasm. Its function is as follows. Associates with the EF-Tu.GDP complex and induces the exchange of GDP to GTP. It remains bound to the aminoacyl-tRNA.EF-Tu.GTP complex up to the GTP hydrolysis stage on the ribosome. In Herminiimonas arsenicoxydans, this protein is Elongation factor Ts.